A 445-amino-acid polypeptide reads, in one-letter code: ATP-dependent protease ATPase subunit HslU (445 aa).

ATP-binding positions include isoleucine 17, 59–64 (GVGKTE), aspartate 254, glutamate 319, and arginine 391.

This sequence belongs to the ClpX chaperone family. HslU subfamily. In terms of assembly, a double ring-shaped homohexamer of HslV is capped on each side by a ring-shaped HslU homohexamer. The assembly of the HslU/HslV complex is dependent on binding of ATP.

It localises to the cytoplasm. In terms of biological role, ATPase subunit of a proteasome-like degradation complex; this subunit has chaperone activity. The binding of ATP and its subsequent hydrolysis by HslU are essential for unfolding of protein substrates subsequently hydrolyzed by HslV. HslU recognizes the N-terminal part of its protein substrates and unfolds these before they are guided to HslV for hydrolysis. The polypeptide is ATP-dependent protease ATPase subunit HslU (Pseudomonas fluorescens (strain Pf0-1)).